The following is a 219-amino-acid chain: Claudin-20 (219 aa).

The Cytoplasmic segment spans residues 1–7 (MASAGLQ). A helical transmembrane segment spans residues 8–28 (LLAFILALSGVSGVLTATLLP). Residues 29–81 (NWKVNVDVDSNIITAIVQLHGLWMDCTWYSTGMFSCALKHSILSLPIHVQAAR) lie on the Extracellular side of the membrane. A helical membrane pass occupies residues 82–102 (ATMVLACVLSALGICTSTVGM). The Cytoplasmic portion of the chain corresponds to 103–118 (KCTRLGGDRETKSHAS). The helical transmembrane segment at 119–139 (FAGGVCFMSAGISSLISTVWY) threads the bilayer. At 140 to 160 (TKEIIANFLDLTVPESNKHEP) the chain is on the extracellular side. Residues 161-181 (GGAIYIGFISAMLLFISGMIF) form a helical membrane-spanning segment. The Cytoplasmic segment spans residues 182–219 (CTSCIKRNPEARLDPPTQQPISNTQLENNSTHNLKDYV). Residues 193–219 (RLDPPTQQPISNTQLENNSTHNLKDYV) are disordered. A compositionally biased stretch (polar residues) spans 200-213 (QPISNTQLENNSTH).

This sequence belongs to the claudin family.

It is found in the cell junction. It localises to the tight junction. The protein resides in the cell membrane. Its function is as follows. Plays a major role in tight junction-specific obliteration of the intercellular space, through calcium-independent cell-adhesion activity. This chain is Claudin-20 (CLDN20), found in Homo sapiens (Human).